Reading from the N-terminus, the 339-residue chain is MADLKPYIAKAASGEPLPLGDAKAAFDIMMSGQATPSQIGGFLMALRVRGETVPEIAGAVASMRSRMIPVIAPDDAMDIVGTGGDQSGSYNVSSCTAFVVAGAGVPVAKHGNRALSSRSGAADALAALGINIEADADTIGRSISEAGLGFMFAPMHHSAMRHVGPSRVELGTRTIFNLLGPLSNPASVKRQLVGIFAPQWLEPLAHVLKELGSETAWVVYGDGLDEMTTAGTTQVAALENGQIRTFEITPEEVGLRRCSPAELKGGEAAENAKALLGVLEGKDSAYRDIVLLNSGAALVVAGKAENLKDGIAQAVQSIDSGAALAVLQKVIAVSNDKPA.

5-phospho-alpha-D-ribose 1-diphosphate is bound by residues G81, 84–85 (GD), S89, 91–94 (NVSS), 109–117 (KHGNRALSS), and A121. G81 is an anthranilate binding site. Residue S93 coordinates Mg(2+). N112 lines the anthranilate pocket. R167 is a binding site for anthranilate. The Mg(2+) site is built by D225 and E226.

It belongs to the anthranilate phosphoribosyltransferase family. In terms of assembly, homodimer. It depends on Mg(2+) as a cofactor.

It carries out the reaction N-(5-phospho-beta-D-ribosyl)anthranilate + diphosphate = 5-phospho-alpha-D-ribose 1-diphosphate + anthranilate. It functions in the pathway amino-acid biosynthesis; L-tryptophan biosynthesis; L-tryptophan from chorismate: step 2/5. Its function is as follows. Catalyzes the transfer of the phosphoribosyl group of 5-phosphorylribose-1-pyrophosphate (PRPP) to anthranilate to yield N-(5'-phosphoribosyl)-anthranilate (PRA). This Brucella ovis (strain ATCC 25840 / 63/290 / NCTC 10512) protein is Anthranilate phosphoribosyltransferase.